The sequence spans 159 residues: Probable cyclic pyranopterin monophosphate synthase accessory protein (159 aa).

D128 is an active-site residue.

The protein belongs to the MoaC family.

The protein operates within cofactor biosynthesis; molybdopterin biosynthesis. Together with MoaA, is involved in the conversion of 5'-GTP to cyclic pyranopterin monophosphate (cPMP or molybdopterin precursor Z). The protein is Probable cyclic pyranopterin monophosphate synthase accessory protein of Methanothermobacter thermautotrophicus (strain ATCC 29096 / DSM 1053 / JCM 10044 / NBRC 100330 / Delta H) (Methanobacterium thermoautotrophicum).